Consider the following 481-residue polypeptide: ATP synthase subunit beta, chloroplastic (481 aa).

162-169 serves as a coordination point for ATP; it reads GGAGVGKT.

It belongs to the ATPase alpha/beta chains family. In terms of assembly, F-type ATPases have 2 components, CF(1) - the catalytic core - and CF(0) - the membrane proton channel. CF(1) has five subunits: alpha(3), beta(3), gamma(1), delta(1), epsilon(1). CF(0) has four main subunits: a(1), b(1), b'(1) and c(9-12).

The protein localises to the plastid. Its subcellular location is the chloroplast thylakoid membrane. The catalysed reaction is ATP + H2O + 4 H(+)(in) = ADP + phosphate + 5 H(+)(out). Produces ATP from ADP in the presence of a proton gradient across the membrane. The catalytic sites are hosted primarily by the beta subunits. The protein is ATP synthase subunit beta, chloroplastic of Chlorella vulgaris (Green alga).